The primary structure comprises 609 residues: WD repeat-containing protein 1 (609 aa).

WD repeat units follow at residues 6-47, 50-89, 95-137, 140-178, 182-220, 226-265, 272-308, 313-353, 360-410, 434-476, 482-520, 525-563, and 568-606; these read EIKK…IRNI, PAIA…IWDT, LLKY…LWDS, SVGE…FFEG, KFKF…IYDG, VCAL…IWDV, STFN…YLDK, KPLR…YWDS, GFSG…KMDV, MKDK…LYSI, KSDD…VFSV, VEHN…VWTV, and TRIK…EWSI.

It belongs to the WD repeat AIP1 family.

Its subcellular location is the cytoplasm. The protein localises to the cytoskeleton. Induces disassembly of actin filaments in conjunction with ADF/cofilin family proteins. Enhances cofilin-mediated actin severing. This is WD repeat-containing protein 1 (WDR1) from Gallus gallus (Chicken).